Consider the following 545-residue polypeptide: High-molecular-weight cytochrome c (545 aa).

The signal sequence occupies residues Met1–Thr31. His66, His69, Cys80, Cys83, His84, His111, Cys114, Cys117, His118, Cys135, Cys138, His139, His159, His162, Cys178, Cys181, His182, His183, Cys202, Cys205, His206, His222, Cys225, Cys228, His229, Cys244, Cys247, His248, His298, His301, Cys308, Cys311, His312, His313, Cys319, Cys322, His323, His341, Cys349, Cys352, His353, Cys362, Cys365, His366, Cys378, Cys381, His382, His449, His470, Cys477, Cys480, His481, His482, Cys493, Cys496, His497, His516, Cys519, Cys522, His523, Cys536, Cys539, and His540 together coordinate heme c.

As to quaternary structure, monomer. Post-translationally, binds 16 heme c groups per subunit. High-spin heme 15 has single axial histidine ligand and the other hemes are low-spin bis-histidinyl coordinated.

The protein localises to the periplasm. HMWC (high-molecular-weight cytochrome c), ORF2, ORF3, ORF4, ORF5 and ORF6 in the HMC operon form a transmembrane protein complex that allows electron flow from the periplasmic hydrogenase to the cytoplasmic enzymes that catalyze reduction of sulfates. The sequence is that of High-molecular-weight cytochrome c (hmcA) from Nitratidesulfovibrio vulgaris (strain ATCC 29579 / DSM 644 / CCUG 34227 / NCIMB 8303 / VKM B-1760 / Hildenborough) (Desulfovibrio vulgaris).